The following is an 81-amino-acid chain: Sulfur carrier protein TusA (81 aa).

C19 acts as the Cysteine persulfide intermediate in catalysis.

It belongs to the sulfur carrier protein TusA family.

The protein resides in the cytoplasm. Sulfur carrier protein which probably makes part of a sulfur-relay system. The sequence is that of Sulfur carrier protein TusA from Shewanella sediminis (strain HAW-EB3).